Reading from the N-terminus, the 205-residue chain is Probable peptidyl-tRNA hydrolase 2 (205 aa).

The segment covering 40-49 has biased composition (polar residues); sequence YSSKNANKAS. Residues 40 to 68 form a disordered region; sequence YSSKNANKASNPEKESPVSVSNDEDSESE. Residues S65 and S79 each carry the phosphoserine modification.

Belongs to the PTH2 family.

It carries out the reaction an N-acyl-L-alpha-aminoacyl-tRNA + H2O = an N-acyl-L-amino acid + a tRNA + H(+). Functionally, the natural substrate for this enzyme may be peptidyl-tRNAs which drop off the ribosome during protein synthesis. The protein is Probable peptidyl-tRNA hydrolase 2 of Schizosaccharomyces pombe (strain 972 / ATCC 24843) (Fission yeast).